The following is a 99-amino-acid chain: Integration host factor subunit alpha (99 aa).

The tract at residues 49 to 75 (FGNFDLRDKNQRPGRNPKTGEDIPITA) is disordered.

Belongs to the bacterial histone-like protein family. As to quaternary structure, heterodimer of an alpha and a beta chain.

Its function is as follows. This protein is one of the two subunits of integration host factor, a specific DNA-binding protein that functions in genetic recombination as well as in transcriptional and translational control. The chain is Integration host factor subunit alpha from Salmonella arizonae (strain ATCC BAA-731 / CDC346-86 / RSK2980).